The primary structure comprises 1427 residues: DNA-directed RNA polymerase subunit beta' (1427 aa).

Zn(2+)-binding residues include cysteine 66, cysteine 68, cysteine 81, and cysteine 84. Residues aspartate 472, aspartate 474, and aspartate 476 each contribute to the Mg(2+) site. The Zn(2+) site is built by cysteine 815, cysteine 889, cysteine 896, and cysteine 899.

The protein belongs to the RNA polymerase beta' chain family. As to quaternary structure, the RNAP catalytic core consists of 2 alpha, 1 beta, 1 beta' and 1 omega subunit. When a sigma factor is associated with the core the holoenzyme is formed, which can initiate transcription. Requires Mg(2+) as cofactor. Zn(2+) serves as cofactor.

The catalysed reaction is RNA(n) + a ribonucleoside 5'-triphosphate = RNA(n+1) + diphosphate. In terms of biological role, DNA-dependent RNA polymerase catalyzes the transcription of DNA into RNA using the four ribonucleoside triphosphates as substrates. The chain is DNA-directed RNA polymerase subunit beta' from Bacteroides fragilis (strain ATCC 25285 / DSM 2151 / CCUG 4856 / JCM 11019 / LMG 10263 / NCTC 9343 / Onslow / VPI 2553 / EN-2).